The following is a 295-amino-acid chain: Protease HtpX (295 aa).

The next 2 membrane-spanning stretches (helical) occupy residues 4–24 (ILLF…TLSL) and 41–61 (SSLL…SLFI). Histidine 147 is a Zn(2+) binding site. Glutamate 148 is a catalytic residue. Zn(2+) is bound at residue histidine 151. 2 consecutive transmembrane segments (helical) span residues 158–178 (VTLA…ARII) and 199–219 (VATI…VMWF). Glutamate 224 serves as a coordination point for Zn(2+).

The protein belongs to the peptidase M48B family. It depends on Zn(2+) as a cofactor.

Its subcellular location is the cell inner membrane. This Pseudomonas putida (strain ATCC 47054 / DSM 6125 / CFBP 8728 / NCIMB 11950 / KT2440) protein is Protease HtpX.